A 304-amino-acid chain; its full sequence is Ribonuclease Z (304 aa).

The Zn(2+) site is built by H63, H65, D67, H68, H143, D213, and H271. The active-site Proton acceptor is the D67.

The protein belongs to the RNase Z family. As to quaternary structure, homodimer. It depends on Zn(2+) as a cofactor.

The catalysed reaction is Endonucleolytic cleavage of RNA, removing extra 3' nucleotides from tRNA precursor, generating 3' termini of tRNAs. A 3'-hydroxy group is left at the tRNA terminus and a 5'-phosphoryl group is left at the trailer molecule.. In terms of biological role, zinc phosphodiesterase, which displays some tRNA 3'-processing endonuclease activity. Probably involved in tRNA maturation, by removing a 3'-trailer from precursor tRNA. The sequence is that of Ribonuclease Z from Parabacteroides distasonis (strain ATCC 8503 / DSM 20701 / CIP 104284 / JCM 5825 / NCTC 11152).